Reading from the N-terminus, the 299-residue chain is Putative KilA-N domain-containing protein R879 (299 aa).

The region spanning 1–75 (MKSDNGILMS…IKVSEIVLSY (75 aa)) is the KilA-N domain. Residues 76 to 150 (HAKEAIKEKE…DKKINELLSK (75 aa)) adopt a coiled-coil conformation.

This is Putative KilA-N domain-containing protein R879 from Acanthamoeba polyphaga mimivirus (APMV).